The following is an 84-amino-acid chain: Small ribosomal subunit protein uS17 (84 aa).

The protein belongs to the universal ribosomal protein uS17 family. Part of the 30S ribosomal subunit.

Its function is as follows. One of the primary rRNA binding proteins, it binds specifically to the 5'-end of 16S ribosomal RNA. The sequence is that of Small ribosomal subunit protein uS17 from Clostridium acetobutylicum (strain ATCC 824 / DSM 792 / JCM 1419 / IAM 19013 / LMG 5710 / NBRC 13948 / NRRL B-527 / VKM B-1787 / 2291 / W).